The following is a 418-amino-acid chain: Sialidase-3 (418 aa).

An FRIP motif motif is present at residues 24–27 (YRIP). Residues Arg25 and Arg45 each coordinate substrate. Catalysis depends on Asp50, which acts as the Proton acceptor. A BNR 1 repeat occupies 129 to 140 (LYSEDSGCSWGE). Substrate-binding residues include Tyr179 and Tyr181. The stretch at 201–212 (FYSDDLGVTWHC) is one BNR 2 repeat. Glu223 and Arg243 together coordinate substrate. A BNR 3 repeat occupies 252 to 263 (AFSTDSGDCFQK). Position 339 (Arg339) interacts with substrate. Tyr369 functions as the Nucleophile in the catalytic mechanism. Glu386 is an active-site residue.

The protein belongs to the glycosyl hydrolase 33 family. As to quaternary structure, interacts with CAV1; this interaction enhances NEU3 sialidase activity within caveola. Interacts with EGFR; this interaction mediates desialylation of EGFR enhancing downstream signaling. Palmitoylated; may regulate intracellular trafficking and anchorage to plasma membrane and endomembranes. As to expression, expressed in brain, cardiac muscle and weakly in liver.

The protein localises to the cell membrane. It localises to the membrane. The protein resides in the caveola. Its subcellular location is the early endosome membrane. It is found in the recycling endosome membrane. The protein localises to the lysosome membrane. The enzyme catalyses Hydrolysis of alpha-(2-&gt;3)-, alpha-(2-&gt;6)-, alpha-(2-&gt;8)- glycosidic linkages of terminal sialic acid residues in oligosaccharides, glycoproteins, glycolipids, colominic acid and synthetic substrates.. It carries out the reaction a ganglioside GD1a + H2O = a ganglioside GM1 + N-acetylneuraminate. It catalyses the reaction a ganglioside GD1a (d18:1(4E)) + H2O = a ganglioside GM1 (d18:1(4E)) + N-acetylneuraminate. The catalysed reaction is a ganglioside GD1b + H2O = a ganglioside GM1 + N-acetylneuraminate. The enzyme catalyses a ganglioside GD1b (d18:1(4E)) + H2O = a ganglioside GM1 (d18:1(4E)) + N-acetylneuraminate. It carries out the reaction a ganglioside GD3 + H2O = a ganglioside GM3 + N-acetylneuraminate. It catalyses the reaction a ganglioside GD3 (d18:1(4E)) + H2O = a ganglioside GM3 (d18:1(4E)) + N-acetylneuraminate. The catalysed reaction is a ganglioside GM3 + H2O = a beta-D-galactosyl-(1-&gt;4)-beta-D-glucosyl-(1&lt;-&gt;1)-ceramide + N-acetylneuraminate. The enzyme catalyses a ganglioside GM1 + H2O = a ganglioside GA1 + N-acetylneuraminate. It carries out the reaction a ganglioside GM1 (d18:1(4E)) + H2O = a ganglioside GA1 (d18:1(4E)) + N-acetylneuraminate. It catalyses the reaction a ganglioside GM2 (d18:1(4E)) + H2O = a ganglioside GA2 (d18:1(4E)) + N-acetylneuraminate. The catalysed reaction is a ganglioside GM3 (d18:1(4E)) + H2O = a beta-D-Gal-(1-&gt;4)-beta-D-Glc-(1&lt;-&gt;1)-Cer(d18:1(4E)) + N-acetylneuraminate. The enzyme catalyses a ganglioside GT1b + H2O = a ganglioside GD1b + N-acetylneuraminate. Functionally, exo-alpha-sialidase that catalyzes the hydrolytic cleavage of the terminal sialic acid (N-acetylneuraminic acid, Neu5Ac) of a glycan moiety in the catabolism of glycolipids, glycoproteins and oligosacharides. Displays high catalytic efficiency for gangliosides including alpha-(2-&gt;3)-sialylated GD1a and GM3 and alpha-(2-&gt;8)-sialylated GD3. Plays a role in the regulation of transmembrane signaling through the modulation of ganglioside content of the lipid bilayer and by direct interaction with signaling receptors, such as EGFR. Desialylates EGFR and activates downstream signaling in proliferating cells. Contributes to clathrin-mediated endocytosis by regulating sorting of endocytosed receptors to early and recycling endosomes. In Rattus norvegicus (Rat), this protein is Sialidase-3 (Neu3).